The chain runs to 177 residues: CDP-archaeol synthase (177 aa).

5 helical membrane passes run 6-26 (LFAS…ACIF), 54-74 (CIFG…LVDF), 90-110 (VILA…GSFI), 124-144 (LLDQ…VAPI), and 148-168 (MIII…IIAY).

This sequence belongs to the CDP-archaeol synthase family. Mg(2+) is required as a cofactor.

Its subcellular location is the cell membrane. The enzyme catalyses 2,3-bis-O-(geranylgeranyl)-sn-glycerol 1-phosphate + CTP + H(+) = CDP-2,3-bis-O-(geranylgeranyl)-sn-glycerol + diphosphate. It functions in the pathway membrane lipid metabolism; glycerophospholipid metabolism. In terms of biological role, catalyzes the formation of CDP-2,3-bis-(O-geranylgeranyl)-sn-glycerol (CDP-archaeol) from 2,3-bis-(O-geranylgeranyl)-sn-glycerol 1-phosphate (DGGGP) and CTP. This reaction is the third ether-bond-formation step in the biosynthesis of archaeal membrane lipids. The chain is CDP-archaeol synthase from Methanocaldococcus jannaschii (strain ATCC 43067 / DSM 2661 / JAL-1 / JCM 10045 / NBRC 100440) (Methanococcus jannaschii).